Consider the following 124-residue polypeptide: Holo-[acyl-carrier-protein] synthase (124 aa).

Mg(2+) contacts are provided by Asp8 and Glu56.

This sequence belongs to the P-Pant transferase superfamily. AcpS family. It depends on Mg(2+) as a cofactor.

The protein localises to the cytoplasm. The enzyme catalyses apo-[ACP] + CoA = holo-[ACP] + adenosine 3',5'-bisphosphate + H(+). Transfers the 4'-phosphopantetheine moiety from coenzyme A to a Ser of acyl-carrier-protein. This Nitratidesulfovibrio vulgaris (strain ATCC 29579 / DSM 644 / CCUG 34227 / NCIMB 8303 / VKM B-1760 / Hildenborough) (Desulfovibrio vulgaris) protein is Holo-[acyl-carrier-protein] synthase.